The sequence spans 471 residues: Trigger factor (471 aa).

One can recognise a PPIase FKBP-type domain in the interval 169–254; that stretch reads EDRVTIDYLG…VKEVAKPNEL (86 aa). Positions 435 to 471 are disordered; sequence VSKEELTAEDEDAASEAKPAKKAAAKKKAEEGKSEEA. Residues 461-471 are compositionally biased toward basic and acidic residues; that stretch reads KKAEEGKSEEA.

Belongs to the FKBP-type PPIase family. Tig subfamily.

It localises to the cytoplasm. It carries out the reaction [protein]-peptidylproline (omega=180) = [protein]-peptidylproline (omega=0). In terms of biological role, involved in protein export. Acts as a chaperone by maintaining the newly synthesized protein in an open conformation. Functions as a peptidyl-prolyl cis-trans isomerase. This Brucella abortus (strain S19) protein is Trigger factor.